Here is a 130-residue protein sequence, read N- to C-terminus: MCFGVLLSGHYYVMVHLLWKLYYIIGRGLGLLTLLMWKEPEIESPTPKTVTSISWYLLEELCCLFRFIYSIQNRERKCKNGPSPNKRGSASGCSRRGGGRGSGYKTLYRDLCENKPTPELWTLQAPELNL.

Residues 76–102 are disordered; that stretch reads RKCKNGPSPNKRGSASGCSRRGGGRGS.

This is an uncharacterized protein from Saccharomyces cerevisiae (strain ATCC 204508 / S288c) (Baker's yeast).